Here is a 301-residue protein sequence, read N- to C-terminus: tRNA dimethylallyltransferase (301 aa).

8 to 15 (GPTAVGKT) provides a ligand contact to ATP. 10-15 (TAVGKT) lines the substrate pocket. The tract at residues 33-36 (DSRQ) is interaction with substrate tRNA.

The protein belongs to the IPP transferase family. Monomer. Mg(2+) is required as a cofactor.

It catalyses the reaction adenosine(37) in tRNA + dimethylallyl diphosphate = N(6)-dimethylallyladenosine(37) in tRNA + diphosphate. Catalyzes the transfer of a dimethylallyl group onto the adenine at position 37 in tRNAs that read codons beginning with uridine, leading to the formation of N6-(dimethylallyl)adenosine (i(6)A). This Thermosipho africanus (strain TCF52B) protein is tRNA dimethylallyltransferase.